The following is a 238-amino-acid chain: Purine nucleoside phosphorylase DeoD-type (238 aa).

A purine D-ribonucleoside is bound at residue His4. Residues Gly20, Arg24, Arg43, and 87-90 (RVGS) each bind phosphate. Residues 179 to 181 (EME) and 203 to 204 (SD) each bind a purine D-ribonucleoside. Asp204 serves as the catalytic Proton donor.

It belongs to the PNP/UDP phosphorylase family. Homohexamer; trimer of homodimers.

It carries out the reaction a purine D-ribonucleoside + phosphate = a purine nucleobase + alpha-D-ribose 1-phosphate. The catalysed reaction is a purine 2'-deoxy-D-ribonucleoside + phosphate = a purine nucleobase + 2-deoxy-alpha-D-ribose 1-phosphate. Catalyzes the reversible phosphorolytic breakdown of the N-glycosidic bond in the beta-(deoxy)ribonucleoside molecules, with the formation of the corresponding free purine bases and pentose-1-phosphate. This is Purine nucleoside phosphorylase DeoD-type from Pasteurella multocida (strain Pm70).